Here is a 292-residue protein sequence, read N- to C-terminus: MSYYNRYRNKRRSDNGGGNLSNSNNNNGGMPSGLSASDAIFDLGKNKRVTVRQFRNINLIDIREYYLDSSTGEMKPGKKGISLTEDLYDELLKHRLNIDEALRRLGSKRPKTKMVRLLSDDEYEDDNNNDSTNNDKDKNGKDKNSPKKRREDKSKASNESHDLEPRSKKKKPAPPTLLPHEENIQNAEREANATLIIPGQAGRKQQEERKQKEKEEAEEAKAKAVAEQEKEAKAKEKIAEPEPEPVPTLQAKKEDIVSNINESKDANSSDEEFAQSLEAEMNKAEDDISEEE.

2 disordered regions span residues 1–31 and 117–292; these read MSYY…GGMP and LLSD…SEEE. The segment covering 20–31 has biased composition (low complexity); sequence LSNSNNNNGGMP. Position 119 is a phosphoserine (Ser119). 4 stretches are compositionally biased toward basic and acidic residues: residues 133–166, 179–191, 204–240, and 251–267; these read NNDK…LEPR, PHEE…EREA, KQQE…KIAE, and AKKE…KDAN. A phosphoserine mark is found at Ser268, Ser269, and Ser289.

Belongs to the transcriptional coactivator PC4 family.

It is found in the nucleus. Plays a role in the release of TFIIB from the transcription complex during transcription initiation. Binds to TFIIB and specifically inhibits the formation of the TBP-TFIIB-promoter complexes. In Saccharomyces cerevisiae (strain ATCC 204508 / S288c) (Baker's yeast), this protein is RNA polymerase II transcriptional coactivator SUB1 (SUB1).